A 396-amino-acid chain; its full sequence is Elongation factor Tu (396 aa).

Residues 10–206 form the tr-type G domain; that stretch reads KPHVNIGTIG…AVDESVPDPI (197 aa). Positions 19–26 are G1; that stretch reads GHVDHGKT. GTP is bound at residue 19 to 26; sequence GHVDHGKT. A Mg(2+)-binding site is contributed by threonine 26. Residues 62–66 form a G2 region; the sequence is GITIN. The G3 stretch occupies residues 83 to 86; sequence DAPG. GTP contacts are provided by residues 83-87 and 138-141; these read DAPGH and NKSD. Positions 138–141 are G4; it reads NKSD. The G5 stretch occupies residues 176-178; that stretch reads SGL.

It belongs to the TRAFAC class translation factor GTPase superfamily. Classic translation factor GTPase family. EF-Tu/EF-1A subfamily. In terms of assembly, monomer.

It is found in the cytoplasm. It catalyses the reaction GTP + H2O = GDP + phosphate + H(+). In terms of biological role, GTP hydrolase that promotes the GTP-dependent binding of aminoacyl-tRNA to the A-site of ribosomes during protein biosynthesis. This Renibacterium salmoninarum (strain ATCC 33209 / DSM 20767 / JCM 11484 / NBRC 15589 / NCIMB 2235) protein is Elongation factor Tu.